The primary structure comprises 201 residues: Cell division protein SepF (201 aa).

The span at 27-38 shows a compositional bias: basic and acidic residues; it reads VQERTSVQRDSR. The interval 27–99 is disordered; that stretch reads VQERTSVQRD…PRVQNKDSVR (73 aa). The segment covering 43–54 has biased composition (polar residues); that stretch reads QEASQRSHMTNS. Basic and acidic residues predominate over residues 72-81; that stretch reads NRQERQRVQR. Residues 83–92 show a composition bias toward polar residues; it reads NAYQQATPRV.

This sequence belongs to the SepF family. As to quaternary structure, homodimer. Interacts with FtsZ.

It localises to the cytoplasm. Its function is as follows. Cell division protein that is part of the divisome complex and is recruited early to the Z-ring. Probably stimulates Z-ring formation, perhaps through the cross-linking of FtsZ protofilaments. Its function overlaps with FtsA. This chain is Cell division protein SepF, found in Streptococcus agalactiae serotype V (strain ATCC BAA-611 / 2603 V/R).